The following is a 674-amino-acid chain: Protein asunder (674 aa).

Residues 516-538 (HKAKDQYRLLYRELEQLIQLNAS) adopt a coiled-coil conformation. The tract at residues 560 to 579 (PSKSEAGTANLRSFTESPLS) is disordered. Positions 564–577 (EAGTANLRSFTESP) are enriched in polar residues. A Nuclear localization signal (NLS) motif is present at residues 601–607 (LKASKRR).

It belongs to the Integrator subunit 13 family. Belongs to the multiprotein complex Integrator, at least composed of IntS1, IntS2, IntS3, IntS4, omd/IntS5, IntS6, defl/IntS7, IntS8, IntS9, IntS10, IntS11, IntS12, asun/IntS13, IntS14 and IntS15. The core complex associates with protein phosphatase 2A subunits mts/PP2A and Pp2A-29B, to form the Integrator-PP2A (INTAC) complex. Post-translationally, phosphorylated.

It is found in the nucleus. The protein resides in the cytoplasm. The protein localises to the perinuclear region. Its function is as follows. Component of the integrator complex, a multiprotein complex that terminates RNA polymerase II (Pol II) transcription in the promoter-proximal region of genes. The integrator complex provides a quality checkpoint during transcription elongation by driving premature transcription termination of transcripts that are unfavorably configured for transcriptional elongation: the complex terminates transcription by (1) catalyzing dephosphorylation of the C-terminal domain (CTD) of Pol II subunit Polr2A/Rbp1 and Spt5, and (2) degrading the exiting nascent RNA transcript via endonuclease activity. The integrator complex is also involved in the 3'-end processing of the U7 snRNA, and also the spliceosomal snRNAs U1, U2, U4 and U5. The polypeptide is Protein asunder (asun) (Drosophila pseudoobscura pseudoobscura (Fruit fly)).